The following is a 202-amino-acid chain: MAGTDWLSARRTELAADRILDAAERLFTQRDPASIGMNEIAKAAGCSRATLYRYFDSREALRTAYVHRETRRLGREIMVKIADVVEPAERLLVSITTTLRMVRDNPALAAWFTTTRPPIGGEMAGRSEVIAALAAAFLNSLGPDDPTTVERRARWVVRMLTSLLMFPGRDEADERAMIAEFVVPIVTPASAAARKAGHPGPE.

The 61-residue stretch at 13 to 73 folds into the HTH tetR-type domain; the sequence is ELAADRILDA…AYVHRETRRL (61 aa). A DNA-binding region (H-T-H motif) is located at residues 36–55; sequence GMNEIAKAAGCSRATLYRYF.

This is an uncharacterized protein from Mycobacterium tuberculosis (strain CDC 1551 / Oshkosh).